The following is a 37-amino-acid chain: Protein YnaM (37 aa).

Residues 4–24 (ILIITSLLIIFSIFSHALIKL) form a helical membrane-spanning segment.

The protein localises to the cell inner membrane. In Escherichia coli (strain K12), this protein is Protein YnaM.